Here is a 316-residue protein sequence, read N- to C-terminus: ATP synthase gamma chain (316 aa).

Belongs to the ATPase gamma chain family. F-type ATPases have 2 components, CF(1) - the catalytic core - and CF(0) - the membrane proton channel. CF(1) has five subunits: alpha(3), beta(3), gamma(1), delta(1), epsilon(1). CF(0) has three main subunits: a, b and c.

The protein localises to the cellular thylakoid membrane. Produces ATP from ADP in the presence of a proton gradient across the membrane. The gamma chain is believed to be important in regulating ATPase activity and the flow of protons through the CF(0) complex. The polypeptide is ATP synthase gamma chain (Prochlorococcus marinus (strain NATL1A)).